Reading from the N-terminus, the 167-residue chain is Leukotoxin-activating lysine-acyltransferase LktC serotype A11 (167 aa).

Active-site residues include histidine 22 and aspartate 91.

Belongs to the RTX toxin acyltransferase family.

The protein localises to the cytoplasm. It carries out the reaction a fatty acyl-[ACP] + L-lysyl-[protein] = N(6)-(fatty acyl)-L-lysyl-[protein] + holo-[ACP] + H(+). Involved in fatty acylation of the protoxin (LktA) at two internal lysine residues, thereby converting it to the active toxin. The chain is Leukotoxin-activating lysine-acyltransferase LktC serotype A11 (lktC) from Mannheimia haemolytica (Pasteurella haemolytica).